Reading from the N-terminus, the 330-residue chain is Bifunctional pinoresinol-lariciresinol reductase 2 (330 aa).

Residues glycine 28–glycine 34, arginine 53, and lysine 62 contribute to the NADP(+) site. Residue lysine 156 is the Proton acceptor of the active site. Arginine 160 lines the NADP(+) pocket. Residue histidine 288 coordinates substrate.

Belongs to the NmrA-type oxidoreductase family. Isoflavone reductase subfamily. In terms of assembly, dimer. In terms of tissue distribution, expressed in leaves, stems, leaves and seeds.

The enzyme catalyses (+)-lariciresinol + NADP(+) = (+)-pinoresinol + NADPH + H(+). The catalysed reaction is (-)-secoisolariciresinol + NADP(+) = (+)-lariciresinol + NADPH + H(+). Functionally, reductase involved in lignan biosynthesis. Catalyzes the enantioselective conversion of (+)-pinoresinol into (+)-lariciresinol and of (+)-lariciresinol into (-)-secoisolariciresinol. Abstracts the 4R-hydride from the NADPH cofactor during catalysis. The sequence is that of Bifunctional pinoresinol-lariciresinol reductase 2 (PLR_Lu2) from Linum usitatissimum (Flax).